The following is a 912-amino-acid chain: Phosphoenolpyruvate carboxylase (912 aa).

Active-site residues include His-138 and Lys-575.

It belongs to the PEPCase type 1 family. Mg(2+) serves as cofactor.

It carries out the reaction oxaloacetate + phosphate = phosphoenolpyruvate + hydrogencarbonate. Forms oxaloacetate, a four-carbon dicarboxylic acid source for the tricarboxylic acid cycle. The polypeptide is Phosphoenolpyruvate carboxylase (Lactobacillus helveticus (strain DPC 4571)).